The chain runs to 756 residues: 5-methyltetrahydropteroyltriglutamate--homocysteine methyltransferase (756 aa).

5-methyltetrahydropteroyltri-L-glutamate contacts are provided by residues Arg-16–Lys-19 and Lys-112. Residues Ile-432 to Ser-434 and Glu-485 contribute to the L-homocysteine site. L-methionine-binding positions include Ile-432 to Ser-434 and Glu-485. 5-methyltetrahydropteroyltri-L-glutamate-binding positions include Arg-516–Cys-517 and Trp-562. Position 600 (Asp-600) interacts with L-homocysteine. L-methionine is bound at residue Asp-600. Glu-606 is a 5-methyltetrahydropteroyltri-L-glutamate binding site. The Zn(2+) site is built by His-642, Cys-644, and Glu-666. The Proton donor role is filled by His-695. Cys-727 is a binding site for Zn(2+).

It belongs to the vitamin-B12 independent methionine synthase family. It depends on Zn(2+) as a cofactor.

The enzyme catalyses 5-methyltetrahydropteroyltri-L-glutamate + L-homocysteine = tetrahydropteroyltri-L-glutamate + L-methionine. It participates in amino-acid biosynthesis; L-methionine biosynthesis via de novo pathway; L-methionine from L-homocysteine (MetE route): step 1/1. Functionally, catalyzes the transfer of a methyl group from 5-methyltetrahydrofolate to homocysteine resulting in methionine formation. This Haemophilus influenzae (strain PittEE) protein is 5-methyltetrahydropteroyltriglutamate--homocysteine methyltransferase.